A 65-amino-acid polypeptide reads, in one-letter code: Large ribosomal subunit protein bL35 (65 aa).

Positions 1–51 (MPKIKTNRGAAKRFRKSASGRVKRGNAFTSHILTHKTRKNKRNLRGTSMVS) are disordered. Basic residues-rich tracts occupy residues 10–24 (AAKR…RVKR) and 33–44 (LTHKTRKNKRNL).

It belongs to the bacterial ribosomal protein bL35 family.

This Pelobacter propionicus (strain DSM 2379 / NBRC 103807 / OttBd1) protein is Large ribosomal subunit protein bL35.